The primary structure comprises 100 residues: Urease subunit gamma (100 aa).

The protein belongs to the urease gamma subunit family. In terms of assembly, heterotrimer of UreA (gamma), UreB (beta) and UreC (alpha) subunits. Three heterotrimers associate to form the active enzyme.

It localises to the cytoplasm. It carries out the reaction urea + 2 H2O + H(+) = hydrogencarbonate + 2 NH4(+). It participates in nitrogen metabolism; urea degradation; CO(2) and NH(3) from urea (urease route): step 1/1. The polypeptide is Urease subunit gamma (Rhodopseudomonas palustris (strain BisB18)).